The primary structure comprises 829 residues: Leucine--tRNA ligase (829 aa).

The short motif at 40-50 is the 'HIGH' region element; sequence PYPSGNIHMGH. The 'KMSKS' region signature appears at 581–585; the sequence is KMSKS. ATP is bound at residue K584.

Belongs to the class-I aminoacyl-tRNA synthetase family.

It localises to the cytoplasm. The catalysed reaction is tRNA(Leu) + L-leucine + ATP = L-leucyl-tRNA(Leu) + AMP + diphosphate. This chain is Leucine--tRNA ligase, found in Oleidesulfovibrio alaskensis (strain ATCC BAA-1058 / DSM 17464 / G20) (Desulfovibrio alaskensis).